Here is a 316-residue protein sequence, read N- to C-terminus: Formimidoylglutamase (316 aa).

H127, D156, H158, D160, D247, and D249 together coordinate Mn(2+).

The protein belongs to the arginase family. It depends on Mn(2+) as a cofactor.

The catalysed reaction is N-formimidoyl-L-glutamate + H2O = formamide + L-glutamate. It functions in the pathway amino-acid degradation; L-histidine degradation into L-glutamate; L-glutamate from N-formimidoyl-L-glutamate (hydrolase route): step 1/1. In terms of biological role, catalyzes the conversion of N-formimidoyl-L-glutamate to L-glutamate and formamide. This chain is Formimidoylglutamase, found in Cupriavidus pinatubonensis (strain JMP 134 / LMG 1197) (Cupriavidus necator (strain JMP 134)).